A 422-amino-acid chain; its full sequence is O-methyltransferase kk1A (422 aa).

Aspartate 277 is a binding site for S-adenosyl-L-methionine. The active-site Proton acceptor is the histidine 320.

This sequence belongs to the class I-like SAM-binding methyltransferase superfamily. Cation-independent O-methyltransferase family.

It participates in secondary metabolite biosynthesis. O-methyltransferase; part of the gene cluster that mediates the biosynthesis of KK-1, a novel cyclic depsipeptide with 10 residues which is a promising active compound with high activity against many plant pathogens, especially Botrytis cinerea. Within the pathway, kk1A is responsible for the O-methylation of tyrosine as a free amino acid before its activation as an aminoacyl-AMP by the corresponding A domain of kk1B. The nonribosomal peptide synthetase (NRPS) kk1B catalyzes the elongation and cyclization of the decapeptide chain composed of 1 D-lactic acid residue (D-Lac), 1 pipecolic acid residue (Pip), 1 aspartic acid residue (Asp), 1 isoleucine residue (Ile), 1 glycine residue (Gly), 1 tyrosine residue (Tyr) and 4 valine residues (Val). The Asp, Ile and 3 Val residues are N-methylated by the 5 methyltransferase domains from the NRPS (found in modules 3, 5, 6, 7 and 9), whereas the Tyr residue is O-methylated by the cluster encoded O-methyltransferase kk1A. The thioesterase kk1J is likely to be involved in the corrective mechanism of peptide chain synthesis. The D-lactate dehydrogenase kk1H is involved in the synthesis of D-lactic acid from pyruvic acid, which is recognized by the A domain of the first kk1B module. The pyrroline-5-carboxylate reductase kk1I is involved in the synthesis of the L-pipecolic acid residue of KK-1 from delta-1-pyrroline-5-carboxylate (P5C), a metabolic intermediate of lysine. It is still unclear how kk1C and kk1D are involved in the production of KK-1. The chain is O-methyltransferase kk1A from Curvularia clavata.